Consider the following 134-residue polypeptide: Transcription antitermination protein NusB (134 aa).

Belongs to the NusB family.

Functionally, involved in transcription antitermination. Required for transcription of ribosomal RNA (rRNA) genes. Binds specifically to the boxA antiterminator sequence of the ribosomal RNA (rrn) operons. The polypeptide is Transcription antitermination protein NusB (Syntrophomonas wolfei subsp. wolfei (strain DSM 2245B / Goettingen)).